We begin with the raw amino-acid sequence, 95 residues long: DNA-directed RNA polymerase subunit Rpo11 (95 aa).

The protein belongs to the archaeal Rpo11/eukaryotic RPB11/RPC19 RNA polymerase subunit family. Part of the RNA polymerase complex.

It localises to the cytoplasm. The enzyme catalyses RNA(n) + a ribonucleoside 5'-triphosphate = RNA(n+1) + diphosphate. DNA-dependent RNA polymerase (RNAP) catalyzes the transcription of DNA into RNA using the four ribonucleoside triphosphates as substrates. This chain is DNA-directed RNA polymerase subunit Rpo11, found in Thermococcus onnurineus (strain NA1).